Reading from the N-terminus, the 413-residue chain is Hemolin (413 aa).

Positions 1–18 are cleaved as a signal peptide; it reads MVSKSIVALAACVAMCVA. 4 consecutive Ig-like C2-type domains span residues 25–112, 121–215, 233–322, and 327–411; these read PVLK…HIIS, PTTF…LVGY, PMYV…VKLT, and PRFT…TLVI. Intrachain disulfides connect cysteine 46–cysteine 97, cysteine 141–cysteine 199, cysteine 252–cysteine 305, and cysteine 349–cysteine 395. N-linked (GlcNAc...) asparagine glycosylation occurs at asparagine 283.

Belongs to the hemolin family. As to expression, hemolymph.

The protein localises to the secreted. In terms of biological role, insect-immune protein with antimicrobial activity. Forms a protein complex at the bacterial surface. Can inhibit hemocyte aggregation. The chain is Hemolin from Manduca sexta (Tobacco hawkmoth).